The primary structure comprises 548 residues: ATP synthase subunit alpha (548 aa).

172-179 (GDRKTGKT) contacts ATP. The interval 526 to 548 (AEAMDEADVEKESVKVRKPAPKK) is disordered.

The protein belongs to the ATPase alpha/beta chains family. In terms of assembly, F-type ATPases have 2 components, CF(1) - the catalytic core - and CF(0) - the membrane proton channel. CF(1) has five subunits: alpha(3), beta(3), gamma(1), delta(1), epsilon(1). CF(0) has three main subunits: a(1), b(2) and c(9-12). The alpha and beta chains form an alternating ring which encloses part of the gamma chain. CF(1) is attached to CF(0) by a central stalk formed by the gamma and epsilon chains, while a peripheral stalk is formed by the delta and b chains.

It is found in the cell membrane. The enzyme catalyses ATP + H2O + 4 H(+)(in) = ADP + phosphate + 5 H(+)(out). Produces ATP from ADP in the presence of a proton gradient across the membrane. The alpha chain is a regulatory subunit. This chain is ATP synthase subunit alpha, found in Mycolicibacterium gilvum (strain PYR-GCK) (Mycobacterium gilvum (strain PYR-GCK)).